Reading from the N-terminus, the 109-residue chain is Spermidine export protein MdtI (109 aa).

Transmembrane regions (helical) follow at residues 6-26 (WVHA…NVFL), 36-56 (IFGL…SQAV), 64-84 (AYAL…WILF), and 88-108 (LNRK…MVKL).

The protein belongs to the drug/metabolite transporter (DMT) superfamily. Small multidrug resistance (SMR) (TC 2.A.7.1) family. MdtI subfamily. Forms a complex with MdtJ.

It localises to the cell inner membrane. Functionally, catalyzes the excretion of spermidine. This chain is Spermidine export protein MdtI, found in Escherichia coli O139:H28 (strain E24377A / ETEC).